A 75-amino-acid chain; its full sequence is DNA-directed RNA polymerase subunit omega (75 aa).

Belongs to the RNA polymerase subunit omega family. As to quaternary structure, in cyanobacteria the RNAP catalytic core is composed of 2 alpha, 1 beta, 1 beta', 1 gamma and 1 omega subunit. When a sigma factor is associated with the core the holoenzyme is formed, which can initiate transcription.

The catalysed reaction is RNA(n) + a ribonucleoside 5'-triphosphate = RNA(n+1) + diphosphate. Its function is as follows. Promotes RNA polymerase assembly. Latches the N- and C-terminal regions of the beta' subunit thereby facilitating its interaction with the beta and alpha subunits. This chain is DNA-directed RNA polymerase subunit omega, found in Synechococcus sp. (strain CC9605).